A 301-amino-acid chain; its full sequence is Putative ribosomal RNA methyltransferase PB17E12.10c (301 aa).

S-adenosyl-L-methionine contacts are provided by glycine 87, tryptophan 89, aspartate 107, and aspartate 186. Lysine 247 acts as the Proton acceptor in catalysis.

Belongs to the class I-like SAM-binding methyltransferase superfamily. RNA methyltransferase RlmE family.

It carries out the reaction a uridine in rRNA + S-adenosyl-L-methionine = a 2'-O-methyluridine in rRNA + S-adenosyl-L-homocysteine + H(+). The polypeptide is Putative ribosomal RNA methyltransferase PB17E12.10c (Schizosaccharomyces pombe (strain 972 / ATCC 24843) (Fission yeast)).